The following is a 343-amino-acid chain: GTPase Obg (343 aa).

One can recognise an Obg domain in the interval 1–158; sequence MFIDEAKIRV…FTLRLELKVL (158 aa). The segment at 121–140 is disordered; it reads RGGRGNQHFATSTHQAPREH. The region spanning 159–333 is the OBG-type G domain; the sequence is ADIGIVGYPN…LKYAMAERVR (175 aa). Residues 165–172, 190–194, 215–218, 286–289, and 314–316 each bind GTP; these read GYPNVGKS, FTTLE, DIPG, SKID, and SAV. 2 residues coordinate Mg(2+): Ser172 and Thr192.

This sequence belongs to the TRAFAC class OBG-HflX-like GTPase superfamily. OBG GTPase family. As to quaternary structure, monomer. Mg(2+) is required as a cofactor.

The protein resides in the cytoplasm. In terms of biological role, an essential GTPase which binds GTP, GDP and possibly (p)ppGpp with moderate affinity, with high nucleotide exchange rates and a fairly low GTP hydrolysis rate. Plays a role in control of the cell cycle, stress response, ribosome biogenesis and in those bacteria that undergo differentiation, in morphogenesis control. The sequence is that of GTPase Obg from Acidobacterium capsulatum (strain ATCC 51196 / DSM 11244 / BCRC 80197 / JCM 7670 / NBRC 15755 / NCIMB 13165 / 161).